The sequence spans 207 residues: Ribosomal RNA small subunit methyltransferase G (207 aa).

S-adenosyl-L-methionine is bound by residues Gly77, Phe82, 100 to 102 (ERS), and Arg141.

This sequence belongs to the methyltransferase superfamily. RNA methyltransferase RsmG family.

The protein localises to the cytoplasm. Its function is as follows. Specifically methylates the N7 position of a guanine in 16S rRNA. The polypeptide is Ribosomal RNA small subunit methyltransferase G (Borrelia hermsii (strain HS1 / DAH)).